The sequence spans 957 residues: Receptor-like protein 34 (957 aa).

The N-terminal stretch at methionine 1 to alanine 31 is a signal peptide. Residues alanine 32–tryptophan 910 are Extracellular-facing. N-linked (GlcNAc...) asparagine glycosylation is found at asparagine 78, asparagine 101, asparagine 114, asparagine 143, asparagine 167, asparagine 191, and asparagine 215. LRR repeat units lie at residues leucine 120–asparagine 143, leucine 144–asparagine 167, leucine 168–leucine 192, histidine 194–leucine 216, serine 217–leucine 240, serine 241–leucine 264, glutamine 266–asparagine 287, leucine 288–leucine 312, threonine 313–leucine 336, asparagine 338–isoleucine 360, proline 361–serine 384, serine 386–leucine 409, leucine 412–histidine 434, leucine 435–tyrosine 459, phenylalanine 460–serine 483, serine 487–glutamine 510, histidine 511–leucine 534, and proline 535–glutamate 557. Asparagine 242 and asparagine 263 each carry an N-linked (GlcNAc...) asparagine glycan. N-linked (GlcNAc...) asparagine glycosylation is found at asparagine 311 and asparagine 332. Asparagine 381 carries an N-linked (GlcNAc...) asparagine glycan. Asparagine 477 is a glycosylation site (N-linked (GlcNAc...) asparagine). Asparagine 541, asparagine 544, asparagine 569, asparagine 593, asparagine 608, and asparagine 618 each carry an N-linked (GlcNAc...) asparagine glycan. An LRR 19; degenerate repeat occupies proline 558–glutamate 580. LRR repeat units lie at residues leucine 581–leucine 605, lysine 606–serine 630, arginine 632–phenylalanine 652, serine 653–serine 675, glutamine 677–phenylalanine 698, proline 699–glutamate 722, leucine 765–leucine 789, lysine 790–leucine 813, alanine 815–leucine 837, and leucine 839–threonine 862. Asparagine 712 is a glycosylation site (N-linked (GlcNAc...) asparagine). 4 N-linked (GlcNAc...) asparagine glycosylation sites follow: asparagine 796, asparagine 812, asparagine 836, and asparagine 844. The chain crosses the membrane as a helical span at residues isoleucine 911 to leucine 931. Over valine 932–histidine 957 the chain is Cytoplasmic.

The protein belongs to the RLP family.

The protein resides in the cell membrane. The protein is Receptor-like protein 34 of Arabidopsis thaliana (Mouse-ear cress).